A 232-amino-acid polypeptide reads, in one-letter code: Megakaryocyte and platelet inhibitory receptor G6b (232 aa).

The first 17 residues, 1-17, serve as a signal peptide directing secretion; sequence MALVLQLLPLLLSKVQG. The Extracellular segment spans residues 18–140; sequence NPEVSLEGNP…GSTHGSEYSK (123 aa). Residues N32 and N112 are each glycosylated (N-linked (GlcNAc...) asparagine). A helical membrane pass occupies residues 141–161; the sequence is VLIPLLGFGLVLGLGALGLVW. Residues 162 to 232 lie on the Cytoplasmic side of the membrane; it reads WRRSCVPPSH…DASTVYAVVV (71 aa). 2 consecutive short sequence motifs (ITIM motif) follow at residues 200–205 and 226–231; these read LHYADL and TVYAVV. Y202 carries the phosphotyrosine modification.

Interacts (via ITIM motif) with PTPN6 and PTPN11. Binds to heparin. N-glycosylated. Post-translationally, may be O-glycosylated. In terms of processing, phosphorylated.

The protein resides in the cell membrane. Functionally, inhibitory receptor that acts as a critical regulator of hematopoietic lineage differentiation, megakaryocyte function and platelet production. Inhibits platelet aggregation and activation by agonists such as ADP and collagen-related peptide. This regulation of megakaryocate function as well as platelet production ann activation is done through the inhibition (via the 2 ITIM motifs) of the receptors CLEC1B and GP6:FcRgamma signaling. Appears to operate in a calcium-independent manner. The protein is Megakaryocyte and platelet inhibitory receptor G6b of Rattus norvegicus (Rat).